The sequence spans 35 residues: Apolipophorin-3 (35 aa).

Equilibrium between a soluble monomer and a bound lipoprotein form. Apolipophorin-3 associates with lipophorin during lipid loading until each particle contains 9 or 14 molecules of apolipophorin-3. Hemolymph.

It is found in the secreted. Its function is as follows. Assists in the loading of diacylglycerol, generated from triacylglycerol stores in the fat body through the action of adipokinetic hormone, into lipophorin, the hemolymph lipoprotein. It increases the lipid carrying capacity of lipophorin by covering the expanding hydrophobic surface resulting from diacylglycerol uptake. It thus plays a critical role in the transport of lipids during flight in several species of insects. Has hemagglutinating activity towards rabbit erythrocytes. This Heliothis virescens (Tobacco budworm moth) protein is Apolipophorin-3.